A 288-amino-acid chain; its full sequence is 4-diphosphocytidyl-2-C-methyl-D-erythritol kinase (288 aa).

Lysine 13 is an active-site residue. An ATP-binding site is contributed by 96-106; that stretch reads PMGGGIGGGSS. Aspartate 138 is an active-site residue.

The protein belongs to the GHMP kinase family. IspE subfamily.

The catalysed reaction is 4-CDP-2-C-methyl-D-erythritol + ATP = 4-CDP-2-C-methyl-D-erythritol 2-phosphate + ADP + H(+). It functions in the pathway isoprenoid biosynthesis; isopentenyl diphosphate biosynthesis via DXP pathway; isopentenyl diphosphate from 1-deoxy-D-xylulose 5-phosphate: step 3/6. Its function is as follows. Catalyzes the phosphorylation of the position 2 hydroxy group of 4-diphosphocytidyl-2C-methyl-D-erythritol. In Aliivibrio fischeri (strain MJ11) (Vibrio fischeri), this protein is 4-diphosphocytidyl-2-C-methyl-D-erythritol kinase.